A 608-amino-acid polypeptide reads, in one-letter code: DNA ligase (608 aa).

Glutamate 266 is an ATP binding site. Lysine 268 functions as the N6-AMP-lysine intermediate in the catalytic mechanism. ATP-binding residues include arginine 273, arginine 288, glutamate 318, phenylalanine 358, arginine 435, and lysine 441.

It belongs to the ATP-dependent DNA ligase family. The cofactor is Mg(2+). Requires Mn(2+) as cofactor.

The enzyme catalyses ATP + (deoxyribonucleotide)n-3'-hydroxyl + 5'-phospho-(deoxyribonucleotide)m = (deoxyribonucleotide)n+m + AMP + diphosphate.. The catalysed reaction is ADP + (deoxyribonucleotide)n-3'-hydroxyl + 5'-phospho-(deoxyribonucleotide)m = (deoxyribonucleotide)n+m + AMP + phosphate.. It carries out the reaction GTP + (deoxyribonucleotide)n-3'-hydroxyl + 5'-phospho-(deoxyribonucleotide)m = (deoxyribonucleotide)n+m + GMP + diphosphate.. Its function is as follows. DNA ligase that seals nicks in double-stranded DNA during DNA replication, DNA recombination and DNA repair. Can use ATP, ADP and GTP, but not CTP, TTP or NAD(+). This Hyperthermus butylicus (strain DSM 5456 / JCM 9403 / PLM1-5) protein is DNA ligase.